A 208-amino-acid polypeptide reads, in one-letter code: Probable molybdenum cofactor guanylyltransferase (208 aa).

GTP-binding positions include isoleucine 12–glycine 14, lysine 24, aspartate 72, and aspartate 101. Aspartate 101 serves as a coordination point for Mg(2+).

Belongs to the MobA family. Requires Mg(2+) as cofactor.

Its subcellular location is the cytoplasm. The enzyme catalyses Mo-molybdopterin + GTP + H(+) = Mo-molybdopterin guanine dinucleotide + diphosphate. Transfers a GMP moiety from GTP to Mo-molybdopterin (Mo-MPT) cofactor (Moco or molybdenum cofactor) to form Mo-molybdopterin guanine dinucleotide (Mo-MGD) cofactor. This Chloroflexus aggregans (strain MD-66 / DSM 9485) protein is Probable molybdenum cofactor guanylyltransferase.